We begin with the raw amino-acid sequence, 420 residues long: Transcription factor bHLH89 (420 aa).

The interval 196–216 (EENNNLDDGLNRKGRGSKKRK) is disordered. Residues 207–216 (RKGRGSKKRK) are compositionally biased toward basic residues. Positions 212-261 (SKKRKIFPTERERRVHFKDRFGDLKNLIPNPTKNDRASIVGEAIDYIKEL) constitute a bHLH domain.

As to quaternary structure, homodimer. In terms of tissue distribution, flowers.

It localises to the nucleus. This Arabidopsis thaliana (Mouse-ear cress) protein is Transcription factor bHLH89 (BHLH89).